The chain runs to 198 residues: Recombination protein RecR (198 aa).

The C4-type zinc-finger motif lies at 57-72 (CEKCNTFTEAQICEVC). Residues 80 to 175 (TLLCVVETPA…AVTRLARGVP (96 aa)) form the Toprim domain.

Belongs to the RecR family.

Its function is as follows. May play a role in DNA repair. It seems to be involved in an RecBC-independent recombinational process of DNA repair. It may act with RecF and RecO. This chain is Recombination protein RecR, found in Burkholderia ambifaria (strain MC40-6).